The primary structure comprises 87 residues: Type 3 secretion system needle filament protein (87 aa).

It belongs to the SctF family. As to quaternary structure, the core secretion machinery of the T3SS is composed of approximately 20 different proteins, including cytoplasmic components, a base, an export apparatus and a needle. This subunit polymerizes and forms the helical needle filament. Forms high-order oligomers in vitro. Forms a stable ternary complex with the YscE-YscG chaperone. Interacts directly with YscG but makes very little direct contact with YscE. Interacts with the needle adapter protein YscI/SctI.

The protein resides in the secreted. The protein localises to the cell surface. The secretion and/or polymerization may be controlled by the type III secretion system regulator YopR. Interaction with YscE-YscG chaperone prevents premature polymerization of YscF/SctF in the bacterial cytosol and is required for its stability and efficient secretion. Interaction with the needle adapter protein YscI/SctI is required for YscF/SctF secretion, needle assembly and Yop secretion. The N-terminus varies among bacterial species, not only in amino acid composition but also in the number of amino acids, and may function in manipulating the host response to the advantage of the bacteria. In Y.pestis, the N-terminus can function to decrease cytokine induction, perhaps contributing to a favorable immune environment leading to survival of Y.pestis within the eukaryotic host. Component of the type III secretion system (T3SS), also called injectisome, which is used to inject bacterial effector proteins into eukaryotic host cells. YscF/SctF forms the external needle filament that protrudes from the bacterial surface. Essential for the calcium-dependent regulation of T3SS and Yop secretion. Required to block Yop secretion in the presence of extracellular calcium. May be the extracellular T3SS component that senses extracellular calcium and/or participates in transmitting the calcium signal to the cytoplasmic compartment where the block in secretion is initiated. Its function is as follows. During infection, can induce innate immune responses. The needle proteins interact with host TLR2 or TLR4, and induce signaling by NF-kappa-B and/or AP-1. This activation is MyD88 dependent and results in increased expression of cytokines, including TNF-alpha, IL-6 and IL-8. Innate immune responses are modulated by the N-terminal region of YscF/SctF. The polypeptide is Type 3 secretion system needle filament protein (Yersinia pestis).